The chain runs to 207 residues: Sodium/potassium-transporting ATPase subunit beta-1-interacting protein 1 (207 aa).

Helical transmembrane passes span 2-22 (GRCD…VAAL), 35-55 (APIL…FGTV), and 62-82 (LILY…IICF). Asn-100 carries an N-linked (GlcNAc...) asparagine glycan. A helical membrane pass occupies residues 147–167 (VVSSALQVFLALFGFVYACYV).

The protein belongs to the NKAIN family. In terms of assembly, interacts with atp1b1 C-terminus.

It is found in the cell membrane. The sequence is that of Sodium/potassium-transporting ATPase subunit beta-1-interacting protein 1 (nkain1) from Danio rerio (Zebrafish).